The primary structure comprises 349 residues: Aminomethyltransferase (349 aa).

Belongs to the GcvT family. In terms of assembly, the glycine cleavage system is composed of four proteins: P, T, L and H.

It catalyses the reaction N(6)-[(R)-S(8)-aminomethyldihydrolipoyl]-L-lysyl-[protein] + (6S)-5,6,7,8-tetrahydrofolate = N(6)-[(R)-dihydrolipoyl]-L-lysyl-[protein] + (6R)-5,10-methylene-5,6,7,8-tetrahydrofolate + NH4(+). Its function is as follows. The glycine cleavage system catalyzes the degradation of glycine. The protein is Aminomethyltransferase of Thermus thermophilus (strain ATCC 27634 / DSM 579 / HB8).